A 338-amino-acid chain; its full sequence is Diacylglycerol acyltransferase/mycolyltransferase Ag85A (338 aa).

The first 42 residues, 1 to 42 (MQLVDRVRGAVTGMSRRLVVGAVGAALVSGLVGAVGGTATAG), serve as a signal peptide directing secretion. A substrate-binding site is contributed by 85–86 (LR). The tract at residues 101–111 (FEWYDQSGLSV) is fibronectin-binding. Cys-130 and Cys-135 form a disulfide bridge. Residues Ser-169 and Asp-197 each coordinate substrate. Ser-169 serves as the catalytic Nucleophile. Residue Glu-273 is part of the active site. Residues 275–278 (FVRT), Lys-282, and 305–307 (HSW) contribute to the substrate site. His-305 is a catalytic residue.

This sequence belongs to the mycobacterial A85 antigen family. As to quaternary structure, homodimer.

Its subcellular location is the secreted. It localises to the cell wall. The protein localises to the cytoplasm. The enzyme catalyses an acyl-CoA + a 1,2-diacyl-sn-glycerol = a triacyl-sn-glycerol + CoA. The catalysed reaction is 2 alpha,alpha'-trehalose 6-mycolate = alpha,alpha'-trehalose 6,6'-bismycolate + alpha,alpha-trehalose. Functionally, the antigen 85 proteins (FbpA, FbpB, FbpC) are responsible for the high affinity of mycobacteria for fibronectin, a large adhesive glycoprotein, which facilitates the attachment of M.tuberculosis to murine alveolar macrophages (AMs). They also help to maintain the integrity of the cell wall by catalyzing the transfer of mycolic acids to cell wall arabinogalactan, and through the synthesis of alpha,alpha-trehalose dimycolate (TDM, cord factor). They catalyze the transfer of a mycoloyl residue from one molecule of alpha,alpha-trehalose monomycolate (TMM) to another TMM, leading to the formation of TDM. FbpA mediates triacylglycerol (TAG) formation with long-chain acyl-CoA as the acyl donor and 1,2-dipalmitoyl-sn-glycerol (1,2-dipalmitin) as the acyl acceptor. It has a preference for C26:0-CoA over C18:1-CoA. This chain is Diacylglycerol acyltransferase/mycolyltransferase Ag85A (fbpA), found in Mycobacterium bovis (strain ATCC BAA-935 / AF2122/97).